The sequence spans 418 residues: Actin-related protein 3 (418 aa).

This sequence belongs to the actin family. ARP3 subfamily. As to quaternary structure, component of the Arp2/3 complex.

Its subcellular location is the cytoplasm. It localises to the cytoskeleton. Functions as ATP-binding component of the Arp2/3 complex which is involved in regulation of actin polymerization and together with an activating nucleation-promoting factor (NPF) mediates the formation of branched actin networks. Seems to contact the pointed end of the daughter actin filament. Required during embryogenesis for the developmental migration of tail hemocytes anteriorly, along the ventral midline. This is Actin-related protein 3 from Drosophila melanogaster (Fruit fly).